Consider the following 283-residue polypeptide: MLDSTGYAVRDDDDDDPELLLPGGEVVDTWREGYPYDERMHRADYEEQKRLLQIELLKLQKWSQAHGHRHVIVFEGRDAAGKGGTIKRFMEHLNPRGARVVALEKPTERERTQWYFQRYVEHLPAAGELVLFDRSWYNRAGVERVMGYCTPKQHAEFIRQAPLFEQMLVNDGISLTKLWFSVTRSEQLTRFTIRQVDPVRQWKLSPTDLASLDKWDDYTAAKEEMFAWTDTEIAPWTVVKSNDKKRARINAMRYVLGKFDYDNKDHEVVGQADPLIVGRALSD.

Belongs to the polyphosphate kinase 2 (PPK2) family. Class I subfamily.

It carries out the reaction [phosphate](n) + GTP = [phosphate](n+1) + GDP. Uses inorganic polyphosphate (polyP) as a donor to convert GDP to GTP. This chain is GDP-polyphosphate phosphotransferase, found in Mycolicibacterium smegmatis (strain ATCC 700084 / mc(2)155) (Mycobacterium smegmatis).